Consider the following 358-residue polypeptide: Core-capsid bridging protein (358 aa).

Positions 296 to 331 are disordered; the sequence is PSITPTPGYRGTTFKPSRTRSTRRRRSVRRRSRRTA. Residues 312–329 are compositionally biased toward basic residues; the sequence is SRTRSTRRRRSVRRRSRR.

This sequence belongs to the adenoviridae core-capsid bridging protein family. As to quaternary structure, monomer. Homodimer. Exists in equilibrium between monomers and dimers in solution. Interacts with the histone-like nucleoprotein; this interactions bridge the virus core to the capsid. Interacts with core protein X; this interactions bridge the virus core to the capsid. Interacts with the endosome lysis protein VI; this interactions bridge the virus core to the capsid. Interacts with the peripentonal hexons. Interacts with host NPM1; this interaction might play a role in virus assembly.

It localises to the virion. The protein localises to the host nucleus. The protein resides in the host nucleolus. Associates loosely with the viral DNA to form an outer shell around the nucleoprotein-DNA complex and links it with the capsid by binding the endosome lysis protein. Dissociates from the viral genome during entry. Might be involved in nuclear capsid assembly of the viral particles through its association with NPM1/nucleophosmin. The protein is Core-capsid bridging protein of Human adenovirus F serotype 40 (HAdV-40).